The sequence spans 256 residues: Thiazole synthase (256 aa).

K95 functions as the Schiff-base intermediate with DXP in the catalytic mechanism. 1-deoxy-D-xylulose 5-phosphate is bound by residues G156, A182–G183, and N204–T205.

The protein belongs to the ThiG family. Homotetramer. Forms heterodimers with either ThiH or ThiS.

It is found in the cytoplasm. The catalysed reaction is [ThiS sulfur-carrier protein]-C-terminal-Gly-aminoethanethioate + 2-iminoacetate + 1-deoxy-D-xylulose 5-phosphate = [ThiS sulfur-carrier protein]-C-terminal Gly-Gly + 2-[(2R,5Z)-2-carboxy-4-methylthiazol-5(2H)-ylidene]ethyl phosphate + 2 H2O + H(+). It participates in cofactor biosynthesis; thiamine diphosphate biosynthesis. In terms of biological role, catalyzes the rearrangement of 1-deoxy-D-xylulose 5-phosphate (DXP) to produce the thiazole phosphate moiety of thiamine. Sulfur is provided by the thiocarboxylate moiety of the carrier protein ThiS. In vitro, sulfur can be provided by H(2)S. The sequence is that of Thiazole synthase from Vibrio cholerae serotype O1 (strain ATCC 39541 / Classical Ogawa 395 / O395).